Reading from the N-terminus, the 119-residue chain is uncharacterized protein (119 aa).

The protein resides in the mitochondrion. It localises to the nucleus. This is an uncharacterized protein from Schizosaccharomyces pombe (strain 972 / ATCC 24843) (Fission yeast).